Here is a 347-residue protein sequence, read N- to C-terminus: GMP reductase (347 aa).

108 to 131 is an NADP(+) binding site; it reads ADFEKTVQILALNPALNFVCIDVA. Positions 181 and 183 each coordinate K(+). Cys186 (thioimidate intermediate) is an active-site residue. 216–239 provides a ligand contact to NADP(+); it reads IVSDGGCTMPGDVAKAFGGGADFV.

It belongs to the IMPDH/GMPR family. GuaC type 1 subfamily. Homotetramer.

The catalysed reaction is IMP + NH4(+) + NADP(+) = GMP + NADPH + 2 H(+). In terms of biological role, catalyzes the irreversible NADPH-dependent deamination of GMP to IMP. It functions in the conversion of nucleobase, nucleoside and nucleotide derivatives of G to A nucleotides, and in maintaining the intracellular balance of A and G nucleotides. In Salmonella typhi, this protein is GMP reductase.